The chain runs to 501 residues: Phenylalanine--tRNA ligase alpha subunit (501 aa).

The L-phenylalanine site is built by T340 and F423. A Mg(2+)-binding site is contributed by E425. An L-phenylalanine-binding site is contributed by F448.

The protein belongs to the class-II aminoacyl-tRNA synthetase family. Phe-tRNA synthetase alpha subunit type 2 subfamily. In terms of assembly, tetramer of two alpha and two beta subunits. Mg(2+) is required as a cofactor.

The protein resides in the cytoplasm. It catalyses the reaction tRNA(Phe) + L-phenylalanine + ATP = L-phenylalanyl-tRNA(Phe) + AMP + diphosphate + H(+). In Methanococcus maripaludis (strain C5 / ATCC BAA-1333), this protein is Phenylalanine--tRNA ligase alpha subunit.